Here is a 208-residue protein sequence, read N- to C-terminus: Proheparin-binding EGF-like growth factor (208 aa).

The signal sequence occupies residues 1 to 23 (MKLLPSVVLKLFLAAVLSALVTG). A propeptide spanning residues 24-62 (ESLERLRRGLAAATSNPDPPTGTTNQLLPTGADRAQEVQ) is cleaved from the precursor. At 24-160 (ESLERLRRGL…ENPLYTYDHT (137 aa)) the chain is on the extracellular side. The interval 82–103 (ALATPGKEKNGKKKRKGKGLGK) is disordered. Threonine 85 is a glycosylation site (O-linked (GalNAc...) threonine). Over residues 91-102 (NGKKKRKGKGLG) the composition is skewed to basic residues. In terms of domain architecture, EGF-like spans 104-144 (KRDPCLKKYKDYCIHGECRYLKELRIPSCHCLPGYHGQRCH). 3 disulfide bridges follow: cysteine 108–cysteine 121, cysteine 116–cysteine 132, and cysteine 134–cysteine 143. Residues 149–208 (PVENPLYTYDHTTVLAVVAVVLSSVCLLVIVGLLMFRYHRRGGYDLESEEKVKLGMASSH) constitute a propeptide, C-terminal. A helical membrane pass occupies residues 161-184 (TVLAVVAVVLSSVCLLVIVGLLMF). Residues 185-208 (RYHRRGGYDLESEEKVKLGMASSH) are Cytoplasmic-facing.

As to quaternary structure, interacts with FBLN1. Interacts with EGFR and ERBB4. O-glycosylated. In terms of tissue distribution, most abundant in skeletal muscle, lung, spleen brain and heart.

The protein localises to the secreted. It localises to the extracellular space. The protein resides in the cell membrane. Its function is as follows. Growth factor that mediates its effects via EGFR, ERBB2 and ERBB4. Required for normal cardiac valve formation and normal heart function. Promotes smooth muscle cell proliferation. May be involved in macrophage-mediated cellular proliferation. It is mitogenic for fibroblasts, but not endothelial cells. It is able to bind EGF receptor/EGFR with higher affinity than EGF itself and is a far more potent mitogen for smooth muscle cells than EGF. Also acts as a diphtheria toxin receptor. The protein is Proheparin-binding EGF-like growth factor (Hbegf) of Rattus norvegicus (Rat).